A 97-amino-acid chain; its full sequence is Putative pterin-4-alpha-carbinolamine dehydratase (97 aa).

The protein belongs to the pterin-4-alpha-carbinolamine dehydratase family.

It catalyses the reaction (4aS,6R)-4a-hydroxy-L-erythro-5,6,7,8-tetrahydrobiopterin = (6R)-L-erythro-6,7-dihydrobiopterin + H2O. This Ruegeria pomeroyi (strain ATCC 700808 / DSM 15171 / DSS-3) (Silicibacter pomeroyi) protein is Putative pterin-4-alpha-carbinolamine dehydratase.